The following is a 526-amino-acid chain: Peptide chain release factor 3 (526 aa).

Residues 8–277 (NKRRTFAIIS…GLTEWAPKPQ (270 aa)) form the tr-type G domain. GTP-binding positions include 17–24 (SHPDAGKT), 85–89 (DTPGH), and 139–142 (NKLD).

Belongs to the TRAFAC class translation factor GTPase superfamily. Classic translation factor GTPase family. PrfC subfamily.

Its subcellular location is the cytoplasm. Functionally, increases the formation of ribosomal termination complexes and stimulates activities of RF-1 and RF-2. It binds guanine nucleotides and has strong preference for UGA stop codons. It may interact directly with the ribosome. The stimulation of RF-1 and RF-2 is significantly reduced by GTP and GDP, but not by GMP. This is Peptide chain release factor 3 from Actinobacillus pleuropneumoniae serotype 5b (strain L20).